Here is a 265-residue protein sequence, read N- to C-terminus: uncharacterized protein (265 aa).

Residues K3–F23 form a helical; Signal-anchor for type II membrane protein membrane-spanning segment. 2 N-linked (GlcNAc...) asparagine; by host glycosylation sites follow: N37 and N125. Positions N37–I94 form a coiled coil. Residues N158–N257 are a coiled coil.

It is found in the host membrane. The protein resides in the virion. This is an uncharacterized protein from Acanthamoeba polyphaga (Amoeba).